The chain runs to 317 residues: Transaldolase (317 aa).

The active-site Schiff-base intermediate with substrate is the Lys126.

It belongs to the transaldolase family. Type 1 subfamily. As to quaternary structure, homodimer.

The protein resides in the cytoplasm. It carries out the reaction D-sedoheptulose 7-phosphate + D-glyceraldehyde 3-phosphate = D-erythrose 4-phosphate + beta-D-fructose 6-phosphate. The protein operates within carbohydrate degradation; pentose phosphate pathway; D-glyceraldehyde 3-phosphate and beta-D-fructose 6-phosphate from D-ribose 5-phosphate and D-xylulose 5-phosphate (non-oxidative stage): step 2/3. Functionally, transaldolase is important for the balance of metabolites in the pentose-phosphate pathway. The polypeptide is Transaldolase (Burkholderia lata (strain ATCC 17760 / DSM 23089 / LMG 22485 / NCIMB 9086 / R18194 / 383)).